A 62-amino-acid chain; its full sequence is Large ribosomal subunit protein bL33 (62 aa).

It belongs to the bacterial ribosomal protein bL33 family.

In Trichodesmium erythraeum (strain IMS101), this protein is Large ribosomal subunit protein bL33.